We begin with the raw amino-acid sequence, 320 residues long: Transaldolase (320 aa).

Lysine 135 serves as the catalytic Schiff-base intermediate with substrate.

It belongs to the transaldolase family. Type 1 subfamily. As to quaternary structure, homodimer.

It is found in the cytoplasm. The enzyme catalyses D-sedoheptulose 7-phosphate + D-glyceraldehyde 3-phosphate = D-erythrose 4-phosphate + beta-D-fructose 6-phosphate. Its pathway is carbohydrate degradation; pentose phosphate pathway; D-glyceraldehyde 3-phosphate and beta-D-fructose 6-phosphate from D-ribose 5-phosphate and D-xylulose 5-phosphate (non-oxidative stage): step 2/3. Its function is as follows. Transaldolase is important for the balance of metabolites in the pentose-phosphate pathway. In Colwellia psychrerythraea (strain 34H / ATCC BAA-681) (Vibrio psychroerythus), this protein is Transaldolase.